Consider the following 104-residue polypeptide: Large ribosomal subunit protein bL21 (104 aa).

The protein belongs to the bacterial ribosomal protein bL21 family. As to quaternary structure, part of the 50S ribosomal subunit. Contacts protein L20.

Its function is as follows. This protein binds to 23S rRNA in the presence of protein L20. The polypeptide is Large ribosomal subunit protein bL21 (Opitutus terrae (strain DSM 11246 / JCM 15787 / PB90-1)).